A 4306-amino-acid polypeptide reads, in one-letter code: Cytoplasmic dynein 2 heavy chain 1 (4306 aa).

Residues 1 to 1650 are stem; sequence MAGSLGDVRK…YVQMVDSELQ (1650 aa). 145–152 provides a ligand contact to ATP; that stretch reads LGIVLRKS. Positions 669–696 form a coiled coil; sequence KELEGYIQKLQNAAERLATENRRLRKWH. AAA regions lie at residues 1651 to 1875, 1941 to 2161, 2249 to 2505, and 2617 to 2862; these read YTYE…VLRG, SALK…KQND, LTAD…WVLG, and HYGR…ESCK. ATP contacts are provided by residues 1689–1696, 1979–1986, 2291–2298, and 2655–2662; these read GPAGTGKT, GPSGAGKS, GPEGCGKG, and GRSGVGRR. Positions 2880-3168 are stalk; sequence AISSSKKKEL…AEVSKAQETI (289 aa). Coiled coils occupy residues 2896–2981, 3108–3199, and 3407–3441; these read LQAG…KEVQ, LETE…LATL, and IQHE…SLLE. 2 AAA regions span residues 3243-3472 and 3689-3904; these read LCTE…LIQD and MALF…VIDR.

This sequence belongs to the dynein heavy chain family. In terms of assembly, the cytoplasmic dynein complex 2 is probably composed by a heavy chain DYNC2H1 homodimer and a number of DYNC2LI1 light intermediate chains. In terms of tissue distribution, detected in brain, lung, spleen and kidney (at protein level). Enriched in the ependymal layer lining the lateral ventricles (at protein level).

The protein resides in the cytoplasm. It localises to the cytoskeleton. Its subcellular location is the cilium axoneme. It is found in the cell membrane. May function as a motor for intraflagellar retrograde transport. Functions in cilia biogenesis. According to PubMed:8666668, it may play a role in transport between endoplasmic reticulum and Golgi or organization of the Golgi in cells. The chain is Cytoplasmic dynein 2 heavy chain 1 (Dync2h1) from Mus musculus (Mouse).